The following is a 907-amino-acid chain: Protein translocase subunit SecA (907 aa).

ATP is bound by residues glutamine 87, 105–109 (GEGKT), and aspartate 511. Cysteine 891, cysteine 893, cysteine 902, and histidine 903 together coordinate Zn(2+).

It belongs to the SecA family. Monomer and homodimer. Part of the essential Sec protein translocation apparatus which comprises SecA, SecYEG and auxiliary proteins SecDF-YajC and YidC. Zn(2+) is required as a cofactor.

It is found in the cell inner membrane. It localises to the cytoplasm. It carries out the reaction ATP + H2O + cellular proteinSide 1 = ADP + phosphate + cellular proteinSide 2.. In terms of biological role, part of the Sec protein translocase complex. Interacts with the SecYEG preprotein conducting channel. Has a central role in coupling the hydrolysis of ATP to the transfer of proteins into and across the cell membrane, serving both as a receptor for the preprotein-SecB complex and as an ATP-driven molecular motor driving the stepwise translocation of polypeptide chains across the membrane. In Aromatoleum aromaticum (strain DSM 19018 / LMG 30748 / EbN1) (Azoarcus sp. (strain EbN1)), this protein is Protein translocase subunit SecA.